A 307-amino-acid chain; its full sequence is Ornithine carbamoyltransferase (307 aa).

Carbamoyl phosphate is bound by residues 53 to 56, Q80, R104, and 131 to 134; these read STRT and HPCQ. L-ornithine is bound by residues N162, D219, and 223-224; that span reads SM. Carbamoyl phosphate contacts are provided by residues 259-260 and R287; that span reads CL.

This sequence belongs to the aspartate/ornithine carbamoyltransferase superfamily. OTCase family.

The protein resides in the cytoplasm. The enzyme catalyses carbamoyl phosphate + L-ornithine = L-citrulline + phosphate + H(+). The protein operates within amino-acid biosynthesis; L-arginine biosynthesis; L-arginine from L-ornithine and carbamoyl phosphate: step 1/3. Its function is as follows. Reversibly catalyzes the transfer of the carbamoyl group from carbamoyl phosphate (CP) to the N(epsilon) atom of ornithine (ORN) to produce L-citrulline. In Psychrobacter arcticus (strain DSM 17307 / VKM B-2377 / 273-4), this protein is Ornithine carbamoyltransferase.